Reading from the N-terminus, the 325-residue chain is DNA-directed RNA polymerase subunit alpha (325 aa).

The alpha N-terminal domain (alpha-NTD) stretch occupies residues 1–231; it reads MQNSLLKPRI…DQLNVFAALE (231 aa). Positions 246-325 are alpha C-terminal domain (alpha-CTD); sequence VDPILLRPVD…ENWPPAGLEK (80 aa).

It belongs to the RNA polymerase alpha chain family. In terms of assembly, homodimer. The RNAP catalytic core consists of 2 alpha, 1 beta, 1 beta' and 1 omega subunit. When a sigma factor is associated with the core the holoenzyme is formed, which can initiate transcription.

It catalyses the reaction RNA(n) + a ribonucleoside 5'-triphosphate = RNA(n+1) + diphosphate. Its function is as follows. DNA-dependent RNA polymerase catalyzes the transcription of DNA into RNA using the four ribonucleoside triphosphates as substrates. The sequence is that of DNA-directed RNA polymerase subunit alpha from Janthinobacterium sp. (strain Marseille) (Minibacterium massiliensis).